Here is a 345-residue protein sequence, read N- to C-terminus: RNA polymerase II holoenzyme cyclin-like subunit (345 aa).

One can recognise a Cyclin N-terminal domain in the interval 53 to 144; it reads QQINRLGKRM…IGECEFYLIS (92 aa). Residues 256–285 form a disordered region; sequence GLTPQSSSGLQAMLPPQSPAGEGPAEGNKN.

The protein belongs to the cyclin family. Cyclin C subfamily. As to quaternary structure, component of the srb8-11 complex, a regulatory module of the Mediator complex.

It localises to the nucleus. In terms of biological role, component of the srb8-11 complex. The srb8-11 complex is a regulatory module of the Mediator complex which is itself involved in regulation of basal and activated RNA polymerase II-dependent transcription. The srb8-11 complex may be involved in the transcriptional repression of a subset of genes regulated by Mediator. It may inhibit the association of the Mediator complex with RNA polymerase II to form the holoenzyme complex. The srb8-11 complex phosphorylates the C-terminal domain (CTD) of the largest subunit of RNA polymerase II. The protein is RNA polymerase II holoenzyme cyclin-like subunit (ssn8) of Neurospora crassa (strain ATCC 24698 / 74-OR23-1A / CBS 708.71 / DSM 1257 / FGSC 987).